The primary structure comprises 303 residues: Probable alpha-L-glutamate ligase 1 (303 aa).

The 184-residue stretch at 104 to 287 (LQLLSRKGVG…IAGLIYSFIE (184 aa)) folds into the ATP-grasp domain. ATP contacts are provided by residues Lys-141, 178 to 179 (EF), Asp-187, and 211 to 213 (RSN). Asp-248, Glu-260, and Asn-262 together coordinate Mg(2+). Residues Asp-248, Glu-260, and Asn-262 each coordinate Mn(2+).

The protein belongs to the RimK family. Mg(2+) is required as a cofactor. It depends on Mn(2+) as a cofactor.

The protein is Probable alpha-L-glutamate ligase 1 of Hahella chejuensis (strain KCTC 2396).